Reading from the N-terminus, the 503-residue chain is ATP synthase subunit alpha, chloroplastic (503 aa).

170 to 177 contacts ATP; the sequence is GDRQTGKT.

This sequence belongs to the ATPase alpha/beta chains family. F-type ATPases have 2 components, CF(1) - the catalytic core - and CF(0) - the membrane proton channel. CF(1) has five subunits: alpha(3), beta(3), gamma(1), delta(1), epsilon(1). CF(0) has four main subunits: a, b, b' and c.

The protein localises to the plastid. The protein resides in the chloroplast thylakoid membrane. The enzyme catalyses ATP + H2O + 4 H(+)(in) = ADP + phosphate + 5 H(+)(out). In terms of biological role, produces ATP from ADP in the presence of a proton gradient across the membrane. The alpha chain is a regulatory subunit. In Trieres chinensis (Marine centric diatom), this protein is ATP synthase subunit alpha, chloroplastic.